The sequence spans 513 residues: Activin receptor type-2A (513 aa).

Residues 1-19 (MGAAAKLAFAVFLISCSSG) form the signal peptide. The Extracellular segment spans residues 20-135 (AILGRSETQE…TSNPVTPKPP (116 aa)). Disulfide bonds link cysteine 30–cysteine 60, cysteine 50–cysteine 78, cysteine 85–cysteine 104, cysteine 91–cysteine 103, and cysteine 105–cysteine 110. 2 N-linked (GlcNAc...) asparagine glycosylation sites follow: asparagine 43 and asparagine 66. A helical membrane pass occupies residues 136-161 (YYNILLYSLVPLMLVAGIVICAFWVY). At 162–513 (RHHKMAYPPV…VDFPPKESSL (352 aa)) the chain is on the cytoplasmic side. Residues 192–485 (LQLLEVKARG…GERITQMQRL (294 aa)) enclose the Protein kinase domain. Residues 198–206 (KARGGFGCV) and lysine 219 contribute to the ATP site. Aspartate 322 serves as the catalytic Proton acceptor.

It belongs to the protein kinase superfamily. TKL Ser/Thr protein kinase family. TGFB receptor subfamily. As to quaternary structure, part of a complex consisting of MAGI2/ARIP1, ACVR2A, ACVR1B and SMAD3. Interacts with MAGI2/ARIP1. Interacts with type I receptor ACVR1. Interacts with TSC22D1/TSC-22. Interacts with activin A/INHBA. Mg(2+) is required as a cofactor. Requires Mn(2+) as cofactor.

It is found in the cell membrane. It catalyses the reaction L-threonyl-[receptor-protein] + ATP = O-phospho-L-threonyl-[receptor-protein] + ADP + H(+). It carries out the reaction L-seryl-[receptor-protein] + ATP = O-phospho-L-seryl-[receptor-protein] + ADP + H(+). Functionally, on ligand binding, forms a receptor complex consisting of two type II and two type I transmembrane serine/threonine kinases. Type II receptors phosphorylate and activate type I receptors which autophosphorylate, then bind and activate SMAD transcriptional regulators. Receptor for activin A, activin B and inhibin A. Mediates induction of adipogenesis by GDF6. This is Activin receptor type-2A (ACVR2A) from Ovis aries (Sheep).